We begin with the raw amino-acid sequence, 1343 residues long: Vascular endothelial growth factor receptor 2 (1343 aa).

Residues 1-19 (MESRALLAVALWFCVETRA) form the signal peptide. Residues 20 to 760 (ASVGLPGDSL…EGVQEKTNLE (741 aa)) are Extracellular-facing. 5 N-linked (GlcNAc...) asparagine glycosylation sites follow: asparagine 46, asparagine 96, asparagine 143, asparagine 158, and asparagine 245. 7 consecutive Ig-like C2-type domains span residues 46 to 109 (NTTL…RDTD), 141 to 207 (NKNK…INDE), 224 to 320 (YDVV…KNKT), 328 to 414 (PFIA…HMVS), 421 to 540 (PQIG…RVIS), 547 to 654 (PEIT…LVKQ), and 663 to 749 (PMIT…TLFI). Cysteine 53 and cysteine 103 are oxidised to a cystine. A disulfide bond links cysteine 150 and cysteine 200. Cysteine 246 and cysteine 307 are oxidised to a cystine. Residues asparagine 318, asparagine 374, asparagine 395, asparagine 507, asparagine 576, asparagine 609, asparagine 615, asparagine 627, asparagine 671, asparagine 700, and asparagine 717 are each glycosylated (N-linked (GlcNAc...) asparagine). Intrachain disulfides connect cysteine 445–cysteine 526 and cysteine 567–cysteine 638. An intrachain disulfide couples cysteine 684 to cysteine 733. Residues 761–781 (VIILVGTAVIAMFFWLLLVIL) form a helical membrane-spanning segment. The Cytoplasmic segment spans residues 782–1343 (VRTVKRANEG…SGTTLRSSPV (562 aa)). Tyrosine 797 bears the Phosphotyrosine mark. The Protein kinase domain maps to 830–1158 (LKLGKPLGRG…FSELVEHLGN (329 aa)). Residues 836-844 (LGRGAFGQV) and lysine 864 each bind ATP. Tyrosine 947 carries the phosphotyrosine; by autocatalysis modification. 2 positions are modified to phosphoserine: serine 978 and serine 980. Tyrosine 992 bears the Phosphotyrosine; by autocatalysis mark. A disulfide bridge links cysteine 1020 with cysteine 1041. Residue aspartate 1024 is the Proton acceptor of the active site. Tyrosine 1050, tyrosine 1055, tyrosine 1171, and tyrosine 1210 each carry phosphotyrosine; by autocatalysis. A phosphoserine mark is found at serine 1227 and serine 1231. Threonine 1234 is modified (phosphothreonine). The tract at residues 1267 to 1314 (TLEDRNKLSPSFGGMMPSKSRESVASEGSNQTSGYQSGYHSDDTDTTV) is disordered. Residues 1292–1305 (SEGSNQTSGYQSGY) are compositionally biased toward polar residues. Phosphotyrosine; by autocatalysis occurs at positions 1301, 1305, and 1315.

The protein belongs to the protein kinase superfamily. Tyr protein kinase family. CSF-1/PDGF receptor subfamily. In terms of assembly, homodimer in the presence of bound dimeric VEGFA, VEGFC or VEGFD ligands; monomeric in the absence of bound ligands. Can also form heterodimers with FLT1/VEGFR1 and KDR/VEGFR2. Interacts (tyrosine phosphorylated) with LFYN, NCK1, PLCG1. Interacts (tyrosine-phosphorylated active form preferentially) with DAB2IP (via C2 domain and active form preferentially); the interaction occurs at the late phase of VEGFA response and inhibits KDR/VEGFR2 activity. Interacts with SHBSH2D2A/TSAD, GRB2, MYOF, CBL and PDCD6. Interacts (via C-terminus domain) with ERN1 (via kinase domain); the interaction is facilitated in a XBP1- and vascular endothelial growth factor (VEGF)-dependent manner in endothelial cells. Interacts (via juxtamembrane region) with chaperone PDCL3 (via thioredoxin fold region); the interaction leads to increased KDR/VEGFR2 abundance through inhibition of its ubiquitination and degradation. Interacts (tyrosine phosphorylated) with CCDC88A/GIV (via SH2-like region); binding requires autophosphorylation of the KDR/VEGFR2 C-terminal region. Interacts with isoform 2 of BSG. Interacts with SLC31A1; this interaction is induced upon VEGFA stimulation leading to SLC31A1 and KDR subsequent co-internalization to early endosomes, thereby activating KDR downstream signaling in endothelial cells. N-glycosylated. In terms of processing, ubiquitinated. Tyrosine phosphorylation of the receptor promotes its poly-ubiquitination, leading to its degradation via the proteasome or lysosomal proteases. Post-translationally, autophosphorylated on tyrosine residues upon ligand binding. Autophosphorylation occurs in trans, i.e. one subunit of the dimeric receptor phosphorylates tyrosine residues on the other subunit. Phosphorylation at Tyr-947 is important for interaction with SH2D2A/TSAD and VEGFA-mediated reorganization of the actin cytoskeleton. Phosphorylation at Tyr-1171 is important for interaction with PLCG1 and SHB. Phosphorylation at Tyr-1210 is important for interaction with NCK1 and FYN. Dephosphorylated by PTPRB. Dephosphorylated by PTPRJ at Tyr-797, Tyr-947, Tyr-992, Tyr-1050, Tyr-1055, Tyr-1171 and Tyr-1210. The inhibitory disulfide bond between Cys-1020 and Cys-1041 may serve as a specific molecular switch for H(2)S-induced modification that regulates KDR/VEGFR2 function. In terms of tissue distribution, expressed in the post-pubertal mammary glands.

The protein resides in the cell membrane. Its subcellular location is the cytoplasm. It localises to the nucleus. It is found in the cytoplasmic vesicle. The protein localises to the early endosome. The protein resides in the cell junction. Its subcellular location is the endoplasmic reticulum. The enzyme catalyses L-tyrosyl-[protein] + ATP = O-phospho-L-tyrosyl-[protein] + ADP + H(+). Present in an inactive conformation in the absence of bound ligand. Binding of VEGFA, VEGFC or VEGFD leads to dimerization and activation by autophosphorylation on tyrosine residues. May be regulated by hydrogen sulfide (H(2)S) levels via a sensitive intracellular disulfide bond. Functionally, tyrosine-protein kinase that acts as a cell-surface receptor for VEGFA, VEGFC and VEGFD. Plays an essential role in the regulation of angiogenesis, vascular development, vascular permeability, and embryonic hematopoiesis. Promotes proliferation, survival, migration and differentiation of endothelial cells. Promotes reorganization of the actin cytoskeleton. Isoforms lacking a transmembrane domain may function as decoy receptors for VEGFA, VEGFC and/or VEGFD. Modulates FLT1 and FLT4 signaling by forming heterodimers. Binding of vascular growth factors to isoform 1 leads to the activation of several signaling cascades. Activation of PLCG1 leads to the production of the cellular signaling molecules diacylglycerol and inositol-1,4,5-trisphosphate and the activation of protein kinase C. Mediates activation of MAPK1/ERK2, MAPK3/ERK1 and the MAP kinase signaling pathway, as well as of the AKT1 signaling pathway. Mediates phosphorylation of PIK3R1, the regulatory subunit of phosphatidylinositol 3-kinase, reorganization of the actin cytoskeleton and activation of PTK2/FAK1. Required for VEGFA-mediated induction of NOS2 and NOS3, leading to the production of the signaling molecule nitric oxide (NO) by endothelial cells. Phosphorylates PLCG1. Promotes phosphorylation of FYN, NCK1, NOS3, PIK3R1, PTK2/FAK1 and SRC. This chain is Vascular endothelial growth factor receptor 2, found in Rattus norvegicus (Rat).